Consider the following 417-residue polypeptide: Calreticulin (417 aa).

An N-terminal signal peptide occupies residues 1-17 (MLLPVPLLLGLLGLAAA). The tract at residues 18–197 (DPTVYFKEQF…NSQVESGSLE (180 aa)) is N-domain. Glutamine 26 is a Ca(2+) binding site. Lysine 48 carries the post-translational modification N6-acetyllysine. Lysine 62 and lysine 64 together coordinate Ca(2+). Lysine 64 is subject to N6-(2-hydroxyisobutyryl)lysine. Residues tyrosine 109, lysine 111, tyrosine 128, and aspartate 135 each coordinate an alpha-D-glucoside. An intrachain disulfide couples cysteine 137 to cysteine 163. Residue lysine 159 is modified to N6-acetyllysine. N-linked (GlcNAc...) asparagine glycosylation occurs at asparagine 179. One copy of the 1-1 repeat lies at 191–202 (VESGSLEDDWDF). Positions 191 to 255 (VESGSLEDDW…DAKKPEDWDE (65 aa)) are 4 X approximate repeats. The tract at residues 193-270 (SGSLEDDWDF…WEPPVIQNPE (78 aa)) is disordered. Residues 198–308 (DDWDFLPPKK…YSPDSNIYAY (111 aa)) form a P-domain region. The segment covering 207 to 251 (KIKDPDAAKPEDWDDRAKIDDPTDSKPEDWDKPEHIPDPDAKKPE) has biased composition (basic and acidic residues). At lysine 209 the chain carries N6-acetyllysine. Repeat copies occupy residues 210-221 (DPDAAKPEDWDD), 227-238 (DPTDSKPEDWDK), 244-255 (DPDAKKPEDWDE), 259-269 (GEWEPPVIQNP), 273-283 (GEWKPRQIDNP), and 287-297 (GIWIHPEIDNP). The interval 237–270 (DKPEHIPDPDAKKPEDWDEEMDGEWEPPVIQNPE) is interaction with PPIB. Positions 252–261 (DWDEEMDGEW) are enriched in acidic residues. Residues 259–297 (GEWEPPVIQNPEYKGEWKPRQIDNPEYKGIWIHPEIDNP) are 3 X approximate repeats. The interval 309–417 (ENFAVLGLDL…AAAGQAKDEL (109 aa)) is C-domain. Aspartate 317 serves as a coordination point for an alpha-D-glucoside. Aspartate 328 contributes to the Ca(2+) binding site. The interval 350-417 (TKAAEKQMKD…AAAGQAKDEL (68 aa)) is disordered. The segment covering 352–378 (AAEKQMKDKQDEEQRLHEEEEEKKGKE) has biased composition (basic and acidic residues). Residues 379–408 (EEEADKDDDEDKDEDEEDEDEKEEEEEEDA) are compositionally biased toward acidic residues. The Prevents secretion from ER motif lies at 414–417 (KDEL).

The protein belongs to the calreticulin family. Monomer. Component of an EIF2 complex at least composed of CELF1/CUGBP1, CALR, CALR3, EIF2S1, EIF2S2, HSP90B1 and HSPA5. Interacts with PDIA3/ERp57 and SPACA9. Interacts with TRIM21. Interacts with NR3C1. Interacts with PPIB. Interacts (via P-domain) with PDIA5. Interacts with GABARAP. Interacts with CLCC1.

Its subcellular location is the endoplasmic reticulum lumen. It is found in the cytoplasm. It localises to the cytosol. The protein localises to the secreted. The protein resides in the extracellular space. Its subcellular location is the extracellular matrix. It is found in the cell surface. It localises to the sarcoplasmic reticulum lumen. The protein localises to the cytoplasmic vesicle. The protein resides in the secretory vesicle. Its subcellular location is the cortical granule. It is found in the cytolytic granule. Functionally, calcium-binding chaperone that promotes folding, oligomeric assembly and quality control in the endoplasmic reticulum (ER) via the calreticulin/calnexin cycle. This lectin interacts transiently with almost all of the monoglucosylated glycoproteins that are synthesized in the ER. Interacts with the DNA-binding domain of NR3C1 and mediates its nuclear export. Involved in maternal gene expression regulation. May participate in oocyte maturation via the regulation of calcium homeostasis. Present in the cortical granules of non-activated oocytes, is exocytosed during the cortical reaction in response to oocyte activation and might participate in the block to polyspermy. This Bos taurus (Bovine) protein is Calreticulin (CALR).